A 561-amino-acid chain; its full sequence is Probable galacturonosyltransferase 9 (561 aa).

The Cytoplasmic segment spans residues 1-27; the sequence is MAVAFRGGRGGVGSGQSTGLRSFFSYR. A helical; Signal-anchor for type II membrane protein transmembrane segment spans residues 28-48; the sequence is IFISALFSFLFLATFSVVLNS. The Lumenal segment spans residues 49-561; the sequence is SRHQPHQDHT…EFVQMCNFGL (513 aa). N-linked (GlcNAc...) asparagine glycosylation is found at N124, N320, N346, and N426.

Belongs to the glycosyltransferase 8 family. As to expression, expressed in roots, inflorescences, siliques, leaves and stems.

The protein localises to the golgi apparatus membrane. Its pathway is glycan metabolism; pectin biosynthesis. May be involved in pectin synthesis. The polypeptide is Probable galacturonosyltransferase 9 (GAUT9) (Arabidopsis thaliana (Mouse-ear cress)).